The primary structure comprises 232 residues: Phosphoribosylformylglycinamidine synthase subunit PurQ (232 aa).

Residues 2 to 232 (KIAIIQFGGT…SMADYITENF (231 aa)) form the Glutamine amidotransferase type-1 domain. The active-site Nucleophile is Cys86. Residues His203 and Glu205 contribute to the active site.

As to quaternary structure, part of the FGAM synthase complex composed of 1 PurL, 1 PurQ and 2 PurS subunits.

The protein resides in the cytoplasm. The catalysed reaction is N(2)-formyl-N(1)-(5-phospho-beta-D-ribosyl)glycinamide + L-glutamine + ATP + H2O = 2-formamido-N(1)-(5-O-phospho-beta-D-ribosyl)acetamidine + L-glutamate + ADP + phosphate + H(+). The enzyme catalyses L-glutamine + H2O = L-glutamate + NH4(+). The protein operates within purine metabolism; IMP biosynthesis via de novo pathway; 5-amino-1-(5-phospho-D-ribosyl)imidazole from N(2)-formyl-N(1)-(5-phospho-D-ribosyl)glycinamide: step 1/2. In terms of biological role, part of the phosphoribosylformylglycinamidine synthase complex involved in the purines biosynthetic pathway. Catalyzes the ATP-dependent conversion of formylglycinamide ribonucleotide (FGAR) and glutamine to yield formylglycinamidine ribonucleotide (FGAM) and glutamate. The FGAM synthase complex is composed of three subunits. PurQ produces an ammonia molecule by converting glutamine to glutamate. PurL transfers the ammonia molecule to FGAR to form FGAM in an ATP-dependent manner. PurS interacts with PurQ and PurL and is thought to assist in the transfer of the ammonia molecule from PurQ to PurL. The polypeptide is Phosphoribosylformylglycinamidine synthase subunit PurQ (Methanosarcina acetivorans (strain ATCC 35395 / DSM 2834 / JCM 12185 / C2A)).